Reading from the N-terminus, the 292-residue chain is Histamine N-methyltransferase (292 aa).

Glu-28 is a binding site for substrate. S-adenosyl-L-methionine contacts are provided by Gly-60, Glu-89, Gln-94, Ser-120, and Ile-142. Residue Asn-283 participates in substrate binding.

The protein belongs to the class I-like SAM-binding methyltransferase superfamily. HNMT family. As to quaternary structure, monomer.

It localises to the cytoplasm. The enzyme catalyses histamine + S-adenosyl-L-methionine = N(tau)-methylhistamine + S-adenosyl-L-homocysteine + H(+). In terms of biological role, inactivates histamine by N-methylation. Plays an important role in degrading histamine and in regulating the airway response to histamine. This Homo sapiens (Human) protein is Histamine N-methyltransferase (HNMT).